We begin with the raw amino-acid sequence, 1165 residues long: Pesticidal crystal protein Cry1Da (1165 aa).

It belongs to the delta endotoxin family.

In terms of biological role, promotes colloidosmotic lysis by binding to the midgut epithelial cells of many lepidopteran larvae. The sequence is that of Pesticidal crystal protein Cry1Da (cry1Da) from Bacillus thuringiensis subsp. aizawai.